Here is a 95-residue protein sequence, read N- to C-terminus: uncharacterized protein (95 aa).

Lys21 contributes to the phosphate binding site. Asp44 lines the Mg(2+) pocket. Asn47 contacts phosphate.

Belongs to the HAD-like hydrolase superfamily. Cof family. Mg(2+) serves as cofactor.

This is an uncharacterized protein from Geobacillus stearothermophilus (Bacillus stearothermophilus).